An 83-amino-acid chain; its full sequence is Male-specific opa-containing protein (83 aa).

Positions 1-18 (MNFIQIAVLFVLVAVALA) are cleaved as a signal peptide. A disordered region spans residues 23-83 (DPANLPAPEA…NVNHNVITIG (61 aa)). Low complexity predominate over residues 28–49 (PAPEAAAAPPAAAAAPPAAAAA). The segment covering 50–59 (PPAPPAPPAA) has biased composition (pro residues).

Adult male abdomen.

Its function is as follows. May be a male specific regulatory factor. In Drosophila melanogaster (Fruit fly), this protein is Male-specific opa-containing protein (msopa).